We begin with the raw amino-acid sequence, 156 residues long: Small ribosomal subunit protein uS7 (156 aa).

The protein belongs to the universal ribosomal protein uS7 family. Part of the 30S ribosomal subunit. Contacts proteins S9 and S11.

Functionally, one of the primary rRNA binding proteins, it binds directly to 16S rRNA where it nucleates assembly of the head domain of the 30S subunit. Is located at the subunit interface close to the decoding center, probably blocks exit of the E-site tRNA. This Pseudomonas entomophila (strain L48) protein is Small ribosomal subunit protein uS7.